Here is a 256-residue protein sequence, read N- to C-terminus: EF-hand calcium-binding domain-containing protein 4A (256 aa).

Residues 1–10 (MAHLGSRRRM) are compositionally biased toward basic residues. The tract at residues 1–32 (MAHLGSRRRMSPGLRTRIAHRKAHRTPPSPLI) is disordered. 2 consecutive EF-hand domains span residues 41–69 (KAHE…QNEL) and 71–106 (LTPE…LLGV). Residues D84, S86, N88, Y90, and E95 each contribute to the Ca(2+) site. Positions 190-235 (IRDVHHEKDTLEQALKRKETDHGREVRCLYEEMEQQIKIERERLLK) form a coiled coil.

It belongs to the EFCAB4 family.

In Xenopus tropicalis (Western clawed frog), this protein is EF-hand calcium-binding domain-containing protein 4A (cracr2b).